The primary structure comprises 124 residues: uncharacterized protein (124 aa).

The tract at residues 1 to 28 (MGTSLRSQSFREPRPSYGRLHESQGRSL) is disordered. Residues 9-28 (SFREPRPSYGRLHESQGRSL) are compositionally biased toward basic and acidic residues.

This is an uncharacterized protein from Mus musculus (Mouse).